A 487-amino-acid polypeptide reads, in one-letter code: N-succinylglutamate 5-semialdehyde dehydrogenase (487 aa).

Position 221-226 (221-226) interacts with NAD(+); it reads GSSDTG. Residues Glu-244 and Cys-278 contribute to the active site.

Belongs to the aldehyde dehydrogenase family. AstD subfamily.

It catalyses the reaction N-succinyl-L-glutamate 5-semialdehyde + NAD(+) + H2O = N-succinyl-L-glutamate + NADH + 2 H(+). It functions in the pathway amino-acid degradation; L-arginine degradation via AST pathway; L-glutamate and succinate from L-arginine: step 4/5. Functionally, catalyzes the NAD-dependent reduction of succinylglutamate semialdehyde into succinylglutamate. The polypeptide is N-succinylglutamate 5-semialdehyde dehydrogenase (Paraburkholderia xenovorans (strain LB400)).